The sequence spans 409 residues: Proteasome-activating nucleotidase (409 aa).

Positions Met-1–Asp-22 are disordered. Residues Val-23–Ser-58 are a coiled coil. ATP is bound by residues Gly-183–Leu-188 and His-322.

It belongs to the AAA ATPase family. As to quaternary structure, homohexamer. The hexameric complex has a two-ring architecture resembling a top hat that caps the 20S proteasome core at one or both ends. Upon ATP-binding, the C-terminus of PAN interacts with the alpha-rings of the proteasome core by binding to the intersubunit pockets.

Its subcellular location is the cytoplasm. Functionally, ATPase which is responsible for recognizing, binding, unfolding and translocation of substrate proteins into the archaeal 20S proteasome core particle. Is essential for opening the gate of the 20S proteasome via an interaction with its C-terminus, thereby allowing substrate entry and access to the site of proteolysis. Thus, the C-termini of the proteasomal ATPase function like a 'key in a lock' to induce gate opening and therefore regulate proteolysis. Unfolding activity requires energy from ATP hydrolysis, whereas ATP binding alone promotes ATPase-20S proteasome association which triggers gate opening, and supports translocation of unfolded substrates. The protein is Proteasome-activating nucleotidase of Aeropyrum pernix (strain ATCC 700893 / DSM 11879 / JCM 9820 / NBRC 100138 / K1).